The primary structure comprises 152 residues: Protein Smg homolog (152 aa).

It belongs to the Smg family.

This chain is Protein Smg homolog, found in Bordetella bronchiseptica (strain ATCC BAA-588 / NCTC 13252 / RB50) (Alcaligenes bronchisepticus).